The primary structure comprises 299 residues: Acetylglutamate kinase (299 aa).

Residues 70 to 71 (GG), R92, and N197 each bind substrate.

Belongs to the acetylglutamate kinase family. ArgB subfamily.

The protein localises to the cytoplasm. The enzyme catalyses N-acetyl-L-glutamate + ATP = N-acetyl-L-glutamyl 5-phosphate + ADP. Its pathway is amino-acid biosynthesis; L-arginine biosynthesis; N(2)-acetyl-L-ornithine from L-glutamate: step 2/4. Functionally, catalyzes the ATP-dependent phosphorylation of N-acetyl-L-glutamate. The sequence is that of Acetylglutamate kinase from Acidiphilium cryptum (strain JF-5).